We begin with the raw amino-acid sequence, 712 residues long: Dipeptidyl-peptidase 7 (712 aa).

An N-terminal signal peptide occupies residues 1 to 23 (MQMKLKSILLGAALLLGASGVAK). Histidine 89 (charge relay system) is an active-site residue. Residues 136–173 (TDKVEGQLKGITDEMERLRKAQEVCQELAKKENADENQ) are a coiled coil. Residues aspartate 225 and serine 648 each act as charge relay system in the active site.

This sequence belongs to the peptidase S46 family.

The protein resides in the cell outer membrane. With respect to regulation, is inhibited in vitro by typical serine protease inhibitors like diisopropyl fluorophosphate, Pefablock, and 3,4-dichloroisocoumarin, but not by typical cysteine class inhibitors such as E-64 or iododoacetic acid. Catalyzes the removal of dipeptides from the N-terminus of oligopeptides. Shows a broad specificity for both aliphatic and aromatic residues in the P1 position, with glycine or proline being not acceptable in this position. Most potently cleaves the synthetic substrate Met-Leu-methylcoumaryl-7-amide (Met-Leu-MCA), Leu-Arg-MCA and Lys-Ala-MCA to a lesser extent. Is likely involved in amino acid metabolism and bacterial growth of asaccharolytic P.gingivalis, that utilizes amino acids from extracellular proteinaceous nutrients as energy and carbon sources. This is Dipeptidyl-peptidase 7 from Porphyromonas gingivalis (strain ATCC 33277 / DSM 20709 / CIP 103683 / JCM 12257 / NCTC 11834 / 2561).